A 149-amino-acid polypeptide reads, in one-letter code: MQVILLDKVANLGSLGDQVNVKAGYARNFLVPQGKAVPATKKNVEFFEARRAELEAKLADVLAAANARAEAINALGTVTIASKSGDEGKLFGSIGTRDIADAVTAAGVDVAKSEVRMPNGVLRTTGEHEVDFQVHSEVFAKLVVNVVAE.

The protein belongs to the bacterial ribosomal protein bL9 family.

Functionally, binds to the 23S rRNA. The chain is Large ribosomal subunit protein bL9 from Enterobacter sp. (strain 638).